We begin with the raw amino-acid sequence, 300 residues long: F-box/LRR-repeat protein 15 (300 aa).

M1 is modified (N-acetylmethionine). The 48-residue stretch at 19-66 folds into the F-box domain; that stretch reads LLDLPWEDVLLPHILSRVPLRQLLRLQRVSRAFRALVQLHLAGLRRFD. The interval 113-269 is interaction with SMURF1; that stretch reads NPQLRSVALA…EPSLSRLRKR (157 aa). 5 LRR repeats span residues 141–162, 167–188, 194–215, 220–241, and 246–267; these read RLQRLSLAHCDWVDGLALRGLA, ALEELDLTACRQLKDEAIVYLA, GLRSLSLAVNANVGDAAVQELA, ELEHLDLTGCLRVGSDGVRTLA, and ALRSLRVRHCHHVAEPSLSRLR.

Belongs to the FBXL15 family. In terms of assembly, part of the SCF (SKP1-CUL1-F-box) E3 ubiquitin-protein ligase complex SCF(FBXL15) composed of CUL1, SKP1, RBX1 and FBXL15.

The protein localises to the cytoplasm. It functions in the pathway protein modification; protein ubiquitination. In terms of biological role, substrate recognition component of a SCF (SKP1-CUL1-F-box protein) E3 ubiquitin-protein ligase complex which mediates the ubiquitination and subsequent proteasomal degradation of SMURF1, thereby acting as a positive regulator of the BMP signaling pathway. Required for dorsal/ventral pattern formation and bone mass maintenance. Also mediates ubiquitination of SMURF2 and WWP2. The sequence is that of F-box/LRR-repeat protein 15 (FBXL15) from Canis lupus familiaris (Dog).